Reading from the N-terminus, the 371-residue chain is Transaldolase (371 aa).

Residue Lys132 forms an Isoglutamyl lysine isopeptide (Lys-Gln) (interchain with Q-Cter in protein Pup) linkage. Lys142 serves as the catalytic Schiff-base intermediate with substrate.

This sequence belongs to the transaldolase family. Type 2 subfamily.

It localises to the cytoplasm. The catalysed reaction is D-sedoheptulose 7-phosphate + D-glyceraldehyde 3-phosphate = D-erythrose 4-phosphate + beta-D-fructose 6-phosphate. It participates in carbohydrate degradation; pentose phosphate pathway; D-glyceraldehyde 3-phosphate and beta-D-fructose 6-phosphate from D-ribose 5-phosphate and D-xylulose 5-phosphate (non-oxidative stage): step 2/3. Functionally, transaldolase is important for the balance of metabolites in the pentose-phosphate pathway. The chain is Transaldolase (tal) from Mycolicibacterium smegmatis (strain ATCC 700084 / mc(2)155) (Mycobacterium smegmatis).